The sequence spans 311 residues: Thymidylate synthase (311 aa).

DUMP contacts are provided by residues Arg-28 and 172–173 (RR). The active-site Nucleophile is Cys-192. Residues 213–216 (RSCD), Asn-224, and 254–256 (HLY) contribute to the dUMP site. Position 216 (Asp-216) interacts with (6R)-5,10-methylene-5,6,7,8-tetrahydrofolate. Ala-310 is a (6R)-5,10-methylene-5,6,7,8-tetrahydrofolate binding site.

This sequence belongs to the thymidylate synthase family. Bacterial-type ThyA subfamily. In terms of assembly, homodimer.

It is found in the cytoplasm. It catalyses the reaction dUMP + (6R)-5,10-methylene-5,6,7,8-tetrahydrofolate = 7,8-dihydrofolate + dTMP. The protein operates within pyrimidine metabolism; dTTP biosynthesis. Catalyzes the reductive methylation of 2'-deoxyuridine-5'-monophosphate (dUMP) to 2'-deoxythymidine-5'-monophosphate (dTMP) while utilizing 5,10-methylenetetrahydrofolate (mTHF) as the methyl donor and reductant in the reaction, yielding dihydrofolate (DHF) as a by-product. This enzymatic reaction provides an intracellular de novo source of dTMP, an essential precursor for DNA biosynthesis. The polypeptide is Thymidylate synthase (Sphingopyxis alaskensis (strain DSM 13593 / LMG 18877 / RB2256) (Sphingomonas alaskensis)).